The primary structure comprises 92 residues: RQC P-site tRNA stabilizing factor (92 aa).

Residues 5 to 65 enclose the S4 RNA-binding domain; sequence MRLDKYLKVS…GPKIVTAKIE (61 aa).

This sequence belongs to the RqcP family. In terms of assembly, associates with stalled 50S ribosomal subunits. Binds to RqcH, 23S rRNA and the P-site tRNA. Does not require RqcH for association with 50S subunits.

In terms of biological role, key component of the ribosome quality control system (RQC), a ribosome-associated complex that mediates the extraction of incompletely synthesized nascent chains from stalled ribosomes and their subsequent degradation. RqcH recruits Ala-charged tRNA, and with RqcP directs the elongation of stalled nascent chains on 50S ribosomal subunits, leading to non-templated C-terminal alanine extensions (Ala tail). The Ala tail promotes nascent chain degradation. RqcP is associated with the translocation-like movement of the peptidyl-tRNA from the A-site into the P-site. This Listeria innocua serovar 6a (strain ATCC BAA-680 / CLIP 11262) protein is RQC P-site tRNA stabilizing factor.